The primary structure comprises 53 residues: Large ribosomal subunit protein eL40 (53 aa).

Belongs to the eukaryotic ribosomal protein eL40 family.

This chain is Large ribosomal subunit protein eL40, found in Pyrobaculum aerophilum (strain ATCC 51768 / DSM 7523 / JCM 9630 / CIP 104966 / NBRC 100827 / IM2).